Here is a 354-residue protein sequence, read N- to C-terminus: Guanine nucleotide-binding protein alpha-2 subunit (354 aa).

One can recognise a G-alpha domain in the interval 33–354 (KIYKVLLLGA…QHSLKEAGMF (322 aa)). The interval 36–49 (KVLLLGASDSGKST) is G1 motif. GTP is bound by residues Asp-44, Ser-45, Gly-46, Lys-47, Ser-48, Thr-49, Asp-148, Leu-173, Thr-179, Gly-201, Asn-269, Lys-270, Asp-272, and Ala-326. Position 48 (Ser-48) interacts with Mg(2+). The G2 motif stretch occupies residues 171–179 (DILRSRNST). Thr-179 serves as a coordination point for Mg(2+). The segment at 194-203 (IRMFDVGGQR) is G3 motif. The G4 motif stretch occupies residues 265 to 272 (ILFLNKFD). The tract at residues 324 to 329 (TTAVDT) is G5 motif.

The protein belongs to the G-alpha family. As to quaternary structure, g proteins are composed of 3 units; alpha, beta and gamma. Binding of the beta-gamma subunit complex (git5-git11) to the alpha subunit (gpa2) facilitates interaction with GPCR git3. Interacts with GPCR git3; the interaction is direct and leads to activation of gpa2 upon glucose stimulation. Interacts with adenylate cyclase cyr1 (via N-terminus); the interaction is direct and serves to activate adenylate cyclase and cAMP-PKA signaling, to repress sexual development and gluconeogenesis. Mg(2+) serves as cofactor.

The protein localises to the cell membrane. In terms of biological role, alpha subunit of the heterotrimeric guanine nucleotide-binding protein (G protein) involved in glucose-induced cAMP signaling. Binds to its cognate transmembrane receptor git3, which senses extracellular glucose, and activates cAMP-PKA signaling to repress sexual development and gluconeogenesis. In Schizosaccharomyces pombe (strain 972 / ATCC 24843) (Fission yeast), this protein is Guanine nucleotide-binding protein alpha-2 subunit.